Reading from the N-terminus, the 609-residue chain is 1-deoxy-D-xylulose-5-phosphate synthase (609 aa).

Thiamine diphosphate is bound by residues histidine 77 and 118–120; that span reads GHS. Aspartate 149 provides a ligand contact to Mg(2+). Thiamine diphosphate is bound by residues 150 to 151, asparagine 178, tyrosine 259, and glutamate 342; that span reads GA. Asparagine 178 contributes to the Mg(2+) binding site.

Belongs to the transketolase family. DXPS subfamily. In terms of assembly, homodimer. Mg(2+) serves as cofactor. Requires thiamine diphosphate as cofactor.

It carries out the reaction D-glyceraldehyde 3-phosphate + pyruvate + H(+) = 1-deoxy-D-xylulose 5-phosphate + CO2. It participates in metabolic intermediate biosynthesis; 1-deoxy-D-xylulose 5-phosphate biosynthesis; 1-deoxy-D-xylulose 5-phosphate from D-glyceraldehyde 3-phosphate and pyruvate: step 1/1. Its function is as follows. Catalyzes the acyloin condensation reaction between C atoms 2 and 3 of pyruvate and glyceraldehyde 3-phosphate to yield 1-deoxy-D-xylulose-5-phosphate (DXP). The protein is 1-deoxy-D-xylulose-5-phosphate synthase of Listeria monocytogenes serotype 4b (strain CLIP80459).